We begin with the raw amino-acid sequence, 209 residues long: Octanoyltransferase (209 aa).

The 180-residue stretch at 30–209 (DHEPEIIYLV…IQTEFNKIFK (180 aa)) folds into the BPL/LPL catalytic domain. Residues 69–76 (RGGKFTFH), 143–145 (AIG), and 156–158 (GVA) each bind substrate. Catalysis depends on cysteine 174, which acts as the Acyl-thioester intermediate.

Belongs to the LipB family.

The protein resides in the cytoplasm. The enzyme catalyses octanoyl-[ACP] + L-lysyl-[protein] = N(6)-octanoyl-L-lysyl-[protein] + holo-[ACP] + H(+). It functions in the pathway protein modification; protein lipoylation via endogenous pathway; protein N(6)-(lipoyl)lysine from octanoyl-[acyl-carrier-protein]: step 1/2. Catalyzes the transfer of endogenously produced octanoic acid from octanoyl-acyl-carrier-protein onto the lipoyl domains of lipoate-dependent enzymes. Lipoyl-ACP can also act as a substrate although octanoyl-ACP is likely to be the physiological substrate. The polypeptide is Octanoyltransferase (Rickettsia peacockii (strain Rustic)).